The sequence spans 370 residues: sn-glycerol-3-phosphate import ATP-binding protein UgpC (370 aa).

The ABC transporter domain maps to 4 to 235 (LRLDGIRKRY…PATRFVASFL (232 aa)). 37-44 (GPSGCGKS) is a binding site for ATP.

This sequence belongs to the ABC transporter superfamily. sn-glycerol-3-phosphate importer (TC 3.A.1.1.3) family. The complex is composed of two ATP-binding proteins (UgpC), two transmembrane proteins (UgpA and UgpE) and a solute-binding protein (UgpB).

Its subcellular location is the cell inner membrane. The enzyme catalyses sn-glycerol 3-phosphate(out) + ATP + H2O = sn-glycerol 3-phosphate(in) + ADP + phosphate + H(+). Its function is as follows. Part of the ABC transporter complex UgpBAEC involved in sn-glycerol-3-phosphate (G3P) import. Responsible for energy coupling to the transport system. The protein is sn-glycerol-3-phosphate import ATP-binding protein UgpC of Chromohalobacter salexigens (strain ATCC BAA-138 / DSM 3043 / CIP 106854 / NCIMB 13768 / 1H11).